A 461-amino-acid polypeptide reads, in one-letter code: Gram-negative bacteria-binding protein 2 (461 aa).

Positions 1–20 are cleaved as a signal peptide; sequence MRWEFLPCLLLLISNNKIFG. In terms of domain architecture, CBM39 spans 21–115; that stretch reads FKVPSINFEM…TRVIINTRLL (95 aa). Asparagine 71, asparagine 170, asparagine 177, and asparagine 364 each carry an N-linked (GlcNAc...) asparagine glycan. Residues 179 to 461 form the GH16 domain; that stretch reads TTWKHDIRQR…VIDYVRVYAE (283 aa).

It belongs to the insect beta-1,3-glucan binding protein family.

It localises to the secreted. Functionally, involved in the recognition of invading microorganisms. Binds specifically to beta-1,3-glucan and activates the phenoloxidase cascade. This is Gram-negative bacteria-binding protein 2 from Drosophila melanogaster (Fruit fly).